The chain runs to 806 residues: Phenylalanine--tRNA ligase beta subunit (806 aa).

Residues 40 to 155 (NKGVKGVVVG…SDAEVGADAL (116 aa)) form the tRNA-binding domain. A B5 domain is found at 409–484 (VQERTVSVTA…RLYGYDHIPV (76 aa)). 4 residues coordinate Mg(2+): aspartate 462, aspartate 468, glutamate 471, and glutamate 472. Positions 712–805 (PRFPSMTRDM…VEEKFGAELR (94 aa)) constitute an FDX-ACB domain.

This sequence belongs to the phenylalanyl-tRNA synthetase beta subunit family. Type 1 subfamily. Tetramer of two alpha and two beta subunits. It depends on Mg(2+) as a cofactor.

The protein resides in the cytoplasm. The enzyme catalyses tRNA(Phe) + L-phenylalanine + ATP = L-phenylalanyl-tRNA(Phe) + AMP + diphosphate + H(+). The chain is Phenylalanine--tRNA ligase beta subunit from Bacillus cereus (strain ATCC 14579 / DSM 31 / CCUG 7414 / JCM 2152 / NBRC 15305 / NCIMB 9373 / NCTC 2599 / NRRL B-3711).